A 214-amino-acid polypeptide reads, in one-letter code: dITP/XTP pyrophosphatase (214 aa).

13–18 (SHNKGK) serves as a coordination point for substrate. Residues Glu-45 and Asp-74 each contribute to the Mg(2+) site. Asp-74 functions as the Proton acceptor in the catalytic mechanism. Residues Ser-75, 163 to 166 (FGYD), Lys-186, and 199 to 200 (HR) contribute to the substrate site.

This sequence belongs to the HAM1 NTPase family. Homodimer. Mg(2+) serves as cofactor.

It catalyses the reaction XTP + H2O = XMP + diphosphate + H(+). The enzyme catalyses dITP + H2O = dIMP + diphosphate + H(+). It carries out the reaction ITP + H2O = IMP + diphosphate + H(+). Its function is as follows. Pyrophosphatase that catalyzes the hydrolysis of nucleoside triphosphates to their monophosphate derivatives, with a high preference for the non-canonical purine nucleotides XTP (xanthosine triphosphate), dITP (deoxyinosine triphosphate) and ITP. Seems to function as a house-cleaning enzyme that removes non-canonical purine nucleotides from the nucleotide pool, thus preventing their incorporation into DNA/RNA and avoiding chromosomal lesions. The sequence is that of dITP/XTP pyrophosphatase from Agrobacterium fabrum (strain C58 / ATCC 33970) (Agrobacterium tumefaciens (strain C58)).